A 309-amino-acid polypeptide reads, in one-letter code: HPr kinase/phosphorylase (309 aa).

Residues histidine 138 and lysine 159 contribute to the active site. 153–160 contributes to the ATP binding site; that stretch reads GQSGVGKS. Serine 160 contributes to the Mg(2+) binding site. The active-site Proton acceptor; for phosphorylation activity. Proton donor; for dephosphorylation activity is aspartate 177. The important for the catalytic mechanism of both phosphorylation and dephosphorylation stretch occupies residues 201 to 210; that stretch reads LEIRGLGIIN. Glutamate 202 provides a ligand contact to Mg(2+). The active site involves arginine 243. The segment at 264–269 is important for the catalytic mechanism of dephosphorylation; the sequence is PVRPGR.

This sequence belongs to the HPrK/P family. As to quaternary structure, homohexamer. Mg(2+) is required as a cofactor.

The catalysed reaction is [HPr protein]-L-serine + ATP = [HPr protein]-O-phospho-L-serine + ADP + H(+). The enzyme catalyses [HPr protein]-O-phospho-L-serine + phosphate + H(+) = [HPr protein]-L-serine + diphosphate. In terms of biological role, catalyzes the ATP- as well as the pyrophosphate-dependent phosphorylation of a specific serine residue in HPr, a phosphocarrier protein of the phosphoenolpyruvate-dependent sugar phosphotransferase system (PTS). HprK/P also catalyzes the pyrophosphate-producing, inorganic phosphate-dependent dephosphorylation (phosphorolysis) of seryl-phosphorylated HPr (P-Ser-HPr). The two antagonistic activities of HprK/P are regulated by several intracellular metabolites, which change their concentration in response to the absence or presence of rapidly metabolisable carbon sources (glucose, fructose, etc.) in the growth medium. Also phosphorylates/dephosphorylates the HPr-like catabolite repression protein crh on a specific serine residue. Therefore, by controlling the phosphorylation state of HPr and crh, HPrK/P is a sensor enzyme that plays a major role in the regulation of carbon metabolism and sugar transport: it mediates carbon catabolite repression (CCR), and regulates PTS-catalyzed carbohydrate uptake and inducer exclusion. The polypeptide is HPr kinase/phosphorylase (Bacillus mycoides (strain KBAB4) (Bacillus weihenstephanensis)).